A 292-amino-acid polypeptide reads, in one-letter code: MAEVVHGPVADPGAVLALVAEAQAADGIGPLSEQFRLGVAGPGPHVVAEGGYAGIVIPPAGGPGAVEAVVAPSHRGRGLGRELVATALDVAGAGATVWAHGDLTPARAVAARLGLTPVRTLLNLRRPLADLDPAPSAPDGVTVRTYAGPADDTALLAVNNAAFAWHPEQGGWGPEQIAERTGADWFDPAGLFLAIGSGSGSDEADGRLLGFHWTKVADPATGLGEVYVVAVAPEGQGRGLGRLLTSVGLHYLADRKLDTVELYVEGDNAAALHTYTKLGFSEHERHVAYAHS.

N-acetyltransferase domains are found at residues 2-138 (AEVV…PSAP) and 141-292 (VTVR…YAHS). A 1D-myo-inositol 2-(L-cysteinylamino)-2-deoxy-alpha-D-glucopyranoside-binding site is contributed by Glu-33. 68-70 (AVV) contacts acetyl-CoA. 1D-myo-inositol 2-(L-cysteinylamino)-2-deoxy-alpha-D-glucopyranoside contacts are provided by Glu-168, Lys-215, and Glu-225. Residues 229–231 (VAV) and 236–242 (QGRGLGR) each bind acetyl-CoA. Residue Tyr-263 coordinates 1D-myo-inositol 2-(L-cysteinylamino)-2-deoxy-alpha-D-glucopyranoside. 268 to 273 (NAAALH) is a binding site for acetyl-CoA.

The protein belongs to the acetyltransferase family. MshD subfamily. In terms of assembly, monomer.

It catalyses the reaction 1D-myo-inositol 2-(L-cysteinylamino)-2-deoxy-alpha-D-glucopyranoside + acetyl-CoA = mycothiol + CoA + H(+). Functionally, catalyzes the transfer of acetyl from acetyl-CoA to desacetylmycothiol (Cys-GlcN-Ins) to form mycothiol. In Tsukamurella paurometabola (strain ATCC 8368 / DSM 20162 / CCUG 35730 / CIP 100753 / JCM 10117 / KCTC 9821 / NBRC 16120 / NCIMB 702349 / NCTC 13040) (Corynebacterium paurometabolum), this protein is Mycothiol acetyltransferase.